A 181-amino-acid chain; its full sequence is uncharacterized protein (181 aa).

The disordered stretch occupies residues 25–47 (ELANEVSAGDEEPYDDDIWESED). The segment covering 32 to 47 (AGDEEPYDDDIWESED) has biased composition (acidic residues). A helical membrane pass occupies residues 149–169 (ILTLILLSCGLLMLFIGYPIL).

It localises to the cytoplasm. The protein resides in the membrane. This is an uncharacterized protein from Schizosaccharomyces pombe (strain 972 / ATCC 24843) (Fission yeast).